Reading from the N-terminus, the 211-residue chain is V-type ATP synthase subunit D (211 aa).

Belongs to the V-ATPase D subunit family.

In terms of biological role, produces ATP from ADP in the presence of a proton gradient across the membrane. This is V-type ATP synthase subunit D from Enterococcus faecalis (strain ATCC 700802 / V583).